The chain runs to 342 residues: L-threonine 3-dehydrogenase (342 aa).

C38 contacts Zn(2+). Residues T40 and H43 each act as charge relay system in the active site. Residues H63, E64, C93, C96, C99, and C107 each coordinate Zn(2+). Residues I175, D195, R200, 262–264, and 286–287 contribute to the NAD(+) site; these read LGI and IY.

Belongs to the zinc-containing alcohol dehydrogenase family. In terms of assembly, homotetramer. Requires Zn(2+) as cofactor.

Its subcellular location is the cytoplasm. It carries out the reaction L-threonine + NAD(+) = (2S)-2-amino-3-oxobutanoate + NADH + H(+). It participates in amino-acid degradation; L-threonine degradation via oxydo-reductase pathway; glycine from L-threonine: step 1/2. Functionally, catalyzes the NAD(+)-dependent oxidation of L-threonine to 2-amino-3-ketobutyrate. The chain is L-threonine 3-dehydrogenase from Burkholderia ambifaria (strain MC40-6).